The following is an 89-amino-acid chain: Elongation factor 1-beta (89 aa).

The protein belongs to the EF-1-beta/EF-1-delta family.

Promotes the exchange of GDP for GTP in EF-1-alpha/GDP, thus allowing the regeneration of EF-1-alpha/GTP that could then be used to form the ternary complex EF-1-alpha/GTP/AAtRNA. The sequence is that of Elongation factor 1-beta from Methanococcus aeolicus (strain ATCC BAA-1280 / DSM 17508 / OCM 812 / Nankai-3).